The sequence spans 246 residues: Protein lin-37 homolog (246 aa).

Methionine 1 is modified (N-acetylmethionine). Glycyl lysine isopeptide (Lys-Gly) (interchain with G-Cter in SUMO2) cross-links involve residues lysine 5 and lysine 7. Basic and acidic residues predominate over residues 36–55 (DRERLDEEPGKTSLDTHNKD). Disordered stretches follow at residues 36–90 (DRER…GGPQ) and 127–209 (PTVR…LIYR). Phosphoserine occurs at positions 135 and 138. A compositionally biased stretch (pro residues) spans 163–172 (LPPPTAPGPP). Threonine 167 carries the phosphothreonine modification. Phosphoserine occurs at positions 182 and 202.

Component of the DREAM complex (also named LINC complex) at least composed of E2F4, E2F5, LIN9, LIN37, LIN52, LIN54, MYBL1, MYBL2, RBL1, RBL2, RBBP4, TFDP1 and TFDP2. The complex exists in quiescent cells where it represses cell cycle-dependent genes. It dissociates in S phase when LIN9, LIN37, LIN52 and LIN54 form a subcomplex that binds to MYBL2.

This is Protein lin-37 homolog (LIN37) from Bos taurus (Bovine).